Consider the following 241-residue polypeptide: Phosphoribosylaminoimidazole-succinocarboxamide synthase (241 aa).

This sequence belongs to the SAICAR synthetase family.

The catalysed reaction is 5-amino-1-(5-phospho-D-ribosyl)imidazole-4-carboxylate + L-aspartate + ATP = (2S)-2-[5-amino-1-(5-phospho-beta-D-ribosyl)imidazole-4-carboxamido]succinate + ADP + phosphate + 2 H(+). The protein operates within purine metabolism; IMP biosynthesis via de novo pathway; 5-amino-1-(5-phospho-D-ribosyl)imidazole-4-carboxamide from 5-amino-1-(5-phospho-D-ribosyl)imidazole-4-carboxylate: step 1/2. The polypeptide is Phosphoribosylaminoimidazole-succinocarboxamide synthase (Caldivirga maquilingensis (strain ATCC 700844 / DSM 13496 / JCM 10307 / IC-167)).